The chain runs to 506 residues: ATP synthase subunit alpha, chloroplastic (506 aa).

170–177 is an ATP binding site; sequence GDRQTGKT. A Phosphothreonine modification is found at Thr-257.

The protein belongs to the ATPase alpha/beta chains family. In terms of assembly, F-type ATPases have 2 components, CF(1) - the catalytic core - and CF(0) - the membrane proton channel. CF(1) has five subunits: alpha(3), beta(3), gamma(1), delta(1), epsilon(1). CF(0) has four main subunits: a, b, b' and c.

The protein localises to the plastid. It is found in the chloroplast thylakoid membrane. The enzyme catalyses ATP + H2O + 4 H(+)(in) = ADP + phosphate + 5 H(+)(out). Its function is as follows. Produces ATP from ADP in the presence of a proton gradient across the membrane. The alpha chain is a regulatory subunit. This is ATP synthase subunit alpha, chloroplastic from Olimarabidopsis pumila (Dwarf rocket).